Reading from the N-terminus, the 287-residue chain is Formamidopyrimidine-DNA glycosylase (287 aa).

Pro-2 serves as the catalytic Schiff-base intermediate with DNA. Residue Glu-3 is the Proton donor of the active site. Residue Lys-58 is the Proton donor; for beta-elimination activity of the active site. DNA contacts are provided by His-104, Arg-123, and Arg-166. The FPG-type zinc-finger motif lies at 251-287 (RTYDREGQPCRNDGCRGVIGREVQAGRSTFYCPVCQR). The active-site Proton donor; for delta-elimination activity is Arg-277.

Belongs to the FPG family. In terms of assembly, monomer. The cofactor is Zn(2+).

It catalyses the reaction Hydrolysis of DNA containing ring-opened 7-methylguanine residues, releasing 2,6-diamino-4-hydroxy-5-(N-methyl)formamidopyrimidine.. It carries out the reaction 2'-deoxyribonucleotide-(2'-deoxyribose 5'-phosphate)-2'-deoxyribonucleotide-DNA = a 3'-end 2'-deoxyribonucleotide-(2,3-dehydro-2,3-deoxyribose 5'-phosphate)-DNA + a 5'-end 5'-phospho-2'-deoxyribonucleoside-DNA + H(+). Functionally, involved in base excision repair of DNA damaged by oxidation or by mutagenic agents. Acts as a DNA glycosylase that recognizes and removes damaged bases. Has a preference for oxidized purines, such as 7,8-dihydro-8-oxoguanine (8-oxoG). Has AP (apurinic/apyrimidinic) lyase activity and introduces nicks in the DNA strand. Cleaves the DNA backbone by beta-delta elimination to generate a single-strand break at the site of the removed base with both 3'- and 5'-phosphates. The protein is Formamidopyrimidine-DNA glycosylase of Phenylobacterium zucineum (strain HLK1).